The primary structure comprises 200 residues: LHFPL tetraspan subfamily member 6 protein (200 aa).

A signal peptide spans 1–21 (MASSLTCAGVIWALLSFLCAA). Helical transmembrane passes span 84–104 (ICTV…LTAI) and 123–143 (GIQF…PLGW). The N-linked (GlcNAc...) asparagine glycan is linked to Asn-154. A helical membrane pass occupies residues 172–192 (CTGAGAAAAMVLCTWMACFAG).

The protein belongs to the LHFP family.

It localises to the membrane. This chain is LHFPL tetraspan subfamily member 6 protein, found in Danio rerio (Zebrafish).